Reading from the N-terminus, the 208-residue chain is Small ribosomal subunit protein uS4 (208 aa).

The tract at residues 30–49 is disordered; it reads KSALEKRPYPPGQHGQRRSK. Residues 98 to 161 form the S4 RNA-binding domain; sequence RRLDNVVYRM…KNNPQIQRSL (64 aa).

It belongs to the universal ribosomal protein uS4 family. As to quaternary structure, part of the 30S ribosomal subunit. Contacts protein S5. The interaction surface between S4 and S5 is involved in control of translational fidelity.

One of the primary rRNA binding proteins, it binds directly to 16S rRNA where it nucleates assembly of the body of the 30S subunit. In terms of biological role, with S5 and S12 plays an important role in translational accuracy. In Nitratiruptor sp. (strain SB155-2), this protein is Small ribosomal subunit protein uS4.